We begin with the raw amino-acid sequence, 581 residues long: Activating signal cointegrator 1 (581 aa).

Alanine 2 bears the N-acetylalanine mark. Residues 97–118 (KSGDHLKRGRKKGRNRQEVPAF) are disordered. Residues 171-187 (CDCLGQKHKLINNCLIC) form a C4-type zinc finger. The tract at residues 200 to 300 (CLFCGTLVCT…ASDSNQWLSK (101 aa)) is mediates interaction with DDRGK1. Position 276 is a phosphoserine (serine 276). Phosphotyrosine is present on tyrosine 289. Residues 300–400 (KLERETLQKR…WVDHTGAASQ (101 aa)) are mediates interaction with UFL1. Residues lysine 324, lysine 325, and lysine 334 each participate in a glycyl lysine isopeptide (Lys-Gly) (interchain with G-Cter in UFM1) cross-link. The residue at position 341 (serine 341) is a Phosphoserine. Lysine 367 is covalently cross-linked (Glycyl lysine isopeptide (Lys-Gly) (interchain with G-Cter in UFM1)). Residues 437-531 (LSVHQPWASL…FKEQFPDISQ (95 aa)) form the ASCH domain.

Interacts with the thyroid hormone receptor/TR (via the ligand-binding domain); this interaction requires the presence of thyroid hormone. Interacts with the androgen receptor/AR; in an androgen, testosterone and dihydrotestosterone-dependent manner. Interacts with ESR1 (estrogen ligand-bound); competes with UFSP2. Interacts with UFSP2; competes with ligand-bound ESR1. Interacts with DDRGK1 and UFL1; the interaction with DDRGK1 is direct. Interacts with NCOA1. Interacts with EP300. Part of the ASC-1 complex, that contains TRIP4, ASCC1, ASCC2 and ASCC3. Identified in the RQT (ribosome quality control trigger) complex, that contains ASCC2, ASCC3 and TRIP4. Interacts with NEK6. Interacts with CSRP1. Interacts with ZCCHC4. In terms of processing, phosphorylated by NEK6. Polyufmylated by the UFM1-conjugating system composed of the enzymes UBA5, UFC1 and UFL1. Deufmylated by the protease UFSP2. Ufmylation of TRIP4 is promoted by ligand-bound nuclear receptors that compete with UFSP2 for interaction with TRIP4. Nuclear receptors-induced ufmylation promotes the recruitment of additional transcriptional coactivators like EP300 and NCOA1 and therefore the assembly of a coactivator complex facilitating nuclear receptor-mediated transcription.

It localises to the nucleus. Its subcellular location is the cytoplasm. The protein resides in the cytosol. The protein localises to the cytoskeleton. It is found in the microtubule organizing center. It localises to the centrosome. Transcription coactivator which associates with nuclear receptors, transcriptional coactivators including EP300, CREBBP and NCOA1, and basal transcription factors like TBP and TFIIA to facilitate nuclear receptors-mediated transcription. May thereby play an important role in establishing distinct coactivator complexes under different cellular conditions. Plays a role in thyroid hormone receptor and estrogen receptor transactivation. Also involved in androgen receptor transactivation. Plays a pivotal role in the transactivation of NF-kappa-B, SRF and AP1. Acts as a mediator of transrepression between nuclear receptor and either AP1 or NF-kappa-B. May play a role in the development of neuromuscular junction. May play a role in late myogenic differentiation. Also functions as part of the RQC trigger (RQT) complex that activates the ribosome quality control (RQC) pathway, a pathway that degrades nascent peptide chains during problematic translation. In Homo sapiens (Human), this protein is Activating signal cointegrator 1.